A 351-amino-acid polypeptide reads, in one-letter code: Renin receptor (351 aa).

The first 17 residues, 1–17 (MAVLVVFLSFLVADVFG), serve as a signal peptide directing secretion. The Extracellular segment spans residues 18–303 (NEFSILRSPG…YNLAYKYNFE (286 aa)). A helical transmembrane segment spans residues 304–324 (YPVVFNLVLWIMIGLALTLIV). At 325 to 351 (TCYNIWNMDPGYDSIIYRMTNQKIRMD) the chain is on the cytoplasmic side. The Mediates retrograde transport to the ER signature appears at 347–351 (KIRMD).

Interacts with renin. Accessory component of the multisubunit proton-transporting vacuolar (V)-ATPase protein pump. Interacts (via N-terminus) with ATP6AP1 (via N-terminus). Interacts with ATP6V0D1; ATP6V0D1 is a V-ATPase complex subunit and the interaction promotes V-ATPase complex assembly. Interacts with TMEM9; TMEM9 is a V-ATPase assembly regulator and the interaction induces the interaction with ATP6V0D1. Interacts with VMA21 (via N-terminus); VMA21 is a V-ATPase accessory component. In terms of processing, phosphorylated. Post-translationally, proteolytically cleaved by a furin-like convertase in the trans-Golgi network to generate N- and C-terminal fragments. Expressed in the brain.

It is found in the endoplasmic reticulum membrane. The protein resides in the lysosome membrane. It localises to the cytoplasmic vesicle. The protein localises to the autophagosome membrane. Its subcellular location is the cell projection. It is found in the dendritic spine membrane. The protein resides in the axon. It localises to the endosome membrane. The protein localises to the clathrin-coated vesicle membrane. Its subcellular location is the secretory vesicle. It is found in the synaptic vesicle membrane. Its function is as follows. Multifunctional protein which functions as a renin, prorenin cellular receptor and is involved in the assembly of the lysosomal proton-transporting V-type ATPase (V-ATPase) and the acidification of the endo-lysosomal system. May mediate renin-dependent cellular responses by activating ERK1 and ERK2. By increasing the catalytic efficiency of renin in AGT/angiotensinogen conversion to angiotensin I, may also play a role in the renin-angiotensin system (RAS). Through its function in V-type ATPase (v-ATPase) assembly and acidification of the lysosome it regulates protein degradation and may control different signaling pathways important for proper brain development, synapse morphology and synaptic transmission. This chain is Renin receptor (ATP6AP2), found in Bos taurus (Bovine).